The chain runs to 147 residues: Cilia- and flagella-associated protein 90 (147 aa).

The disordered stretch occupies residues 1 to 36 (MEDDEEETTASTLRGKPRPPPVSAQSAFSYIPPRRL).

As to quaternary structure, microtubule inner protein component of sperm flagellar doublet microtubules.

It is found in the cytoplasm. Its subcellular location is the cytoskeleton. The protein localises to the cilium axoneme. It localises to the flagellum axoneme. Its function is as follows. Microtubule inner protein (MIP) part of the dynein-decorated doublet microtubules (DMTs) in cilia axoneme, which is required for motile cilia beating. The polypeptide is Cilia- and flagella-associated protein 90 (Homo sapiens (Human)).